A 262-amino-acid polypeptide reads, in one-letter code: Indole-3-glycerol phosphate synthase (262 aa).

Belongs to the TrpC family.

The catalysed reaction is 1-(2-carboxyphenylamino)-1-deoxy-D-ribulose 5-phosphate + H(+) = (1S,2R)-1-C-(indol-3-yl)glycerol 3-phosphate + CO2 + H2O. It functions in the pathway amino-acid biosynthesis; L-tryptophan biosynthesis; L-tryptophan from chorismate: step 4/5. In Staphylococcus epidermidis (strain ATCC 35984 / DSM 28319 / BCRC 17069 / CCUG 31568 / BM 3577 / RP62A), this protein is Indole-3-glycerol phosphate synthase.